Here is a 206-residue protein sequence, read N- to C-terminus: Large ribosomal subunit protein uL13w (206 aa).

The protein belongs to the universal ribosomal protein uL13 family.

In Arabidopsis thaliana (Mouse-ear cress), this protein is Large ribosomal subunit protein uL13w (RPL13AD).